An 898-amino-acid polypeptide reads, in one-letter code: Protein SOV1, mitochondrial (898 aa).

A mitochondrion-targeting transit peptide spans 1–31 (MFKYNRSLCSSALIAKSQIRFYRLKRAPLNY).

The protein resides in the mitochondrion. The protein is Protein SOV1, mitochondrial (SOV1) of Saccharomyces cerevisiae (strain ATCC 204508 / S288c) (Baker's yeast).